We begin with the raw amino-acid sequence, 128 residues long: MRMYETIFIVQPDLGEEEMKGISTKVQDVIASMKGDFKRLEDWGPRKLAYPINKFARGRYYYLRFDGDSALIAELERRLRLDDKVIRYQSVKLEKEVALAAAIPTKVAEEEAVESAEETKVETTTVEE.

The protein belongs to the bacterial ribosomal protein bS6 family.

Its function is as follows. Binds together with bS18 to 16S ribosomal RNA. This is Small ribosomal subunit protein bS6 from Geotalea uraniireducens (strain Rf4) (Geobacter uraniireducens).